The chain runs to 238 residues: 1-(5-phosphoribosyl)-5-[(5-phosphoribosylamino)methylideneamino] imidazole-4-carboxamide isomerase (238 aa).

Asp8 functions as the Proton acceptor in the catalytic mechanism. Asp129 (proton donor) is an active-site residue.

The protein belongs to the HisA/HisF family.

It localises to the cytoplasm. It carries out the reaction 1-(5-phospho-beta-D-ribosyl)-5-[(5-phospho-beta-D-ribosylamino)methylideneamino]imidazole-4-carboxamide = 5-[(5-phospho-1-deoxy-D-ribulos-1-ylimino)methylamino]-1-(5-phospho-beta-D-ribosyl)imidazole-4-carboxamide. It functions in the pathway amino-acid biosynthesis; L-histidine biosynthesis; L-histidine from 5-phospho-alpha-D-ribose 1-diphosphate: step 4/9. The polypeptide is 1-(5-phosphoribosyl)-5-[(5-phosphoribosylamino)methylideneamino] imidazole-4-carboxamide isomerase (Brachyspira hyodysenteriae (strain ATCC 49526 / WA1)).